The primary structure comprises 304 residues: Mas-related G-protein coupled receptor member A1 (304 aa).

The Extracellular portion of the chain corresponds to 1–17 (MDNTIPGGINITILIPN). Asn-10 carries an N-linked (GlcNAc...) asparagine glycan. Residues 18 to 38 (LMIIIFGLVGLTGNGIVFWLL) traverse the membrane as a helical segment. Residues 39 to 53 (GFCLHRNAFSVYILN) are Cytoplasmic-facing. Residues 54 to 74 (LALADFFFLLGHIIDSILLLL) form a helical membrane-spanning segment. A topological domain (extracellular) is located at residue Asn-75. Residues 76–96 (VFYPITFLLCFYTIMMVLYIA) traverse the membrane as a helical segment. Residues 97–131 (GLSMLSAISTERCLSVLCPIWYHCHRPEHTSTVMC) lie on the Cytoplasmic side of the membrane. The chain crosses the membrane as a helical span at residues 132 to 152 (AVIWVLSLLICILNSYFCGFL). Topologically, residues 153 to 166 (NTQYKNENGCLALN) are extracellular. Residues 167–187 (FFTAAYLMFLFVVLCLSSLAL) form a helical membrane-spanning segment. Residues 188–206 (VARLFCGTGQIKLTRLYVT) are Cytoplasmic-facing. A helical membrane pass occupies residues 207 to 227 (IILSILVFLLCGLPFGIHWFL). Over 228–243 (LFKIKDDFHVFDLGFY) the chain is Extracellular. A helical transmembrane segment spans residues 244 to 264 (LASVVLTAINSCANPIIYFFV). At 265–304 (GSFRHRLKHQTLKMVLQNALQDTPETAKIMVEMSRSKSEP) the chain is on the cytoplasmic side.

Belongs to the G-protein coupled receptor 1 family. Mas subfamily. In terms of tissue distribution, expressed in a subset of sensory neurons that includes nociceptors. Expressed in the subclass of non-peptidergic sensory neurons that are IB4(+) and VR1(-).

It localises to the cell membrane. Orphan receptor activated by a subset of RFamide-family neuropeptides such as FLRF-amide and FMRF-amide. Mediates its action by association with G proteins that activate a phosphatidylinositol-calcium second messenger system. Its effect is mediated by G(q) and G(11) proteins. May regulate the function of nociceptive neurons by modulation of pain perception. The polypeptide is Mas-related G-protein coupled receptor member A1 (Mrgpra1) (Mus musculus (Mouse)).